A 106-amino-acid polypeptide reads, in one-letter code: Transcription initiation factor IIA subunit 2 (106 aa).

This sequence belongs to the TFIIA subunit 2 family. In terms of assembly, TFIIA is a heterodimer of the large unprocessed subunit 1 and a small subunit gamma. It was originally believed to be a heterotrimer of an alpha, a beta and a gamma subunit.

Its subcellular location is the nucleus. Functionally, TFIIA is a component of the transcription machinery of RNA polymerase II and plays an important role in transcriptional activation. TFIIA in a complex with TBP mediates transcriptional activity. Protein involved in the resistance to X.oryzae. This chain is Transcription initiation factor IIA subunit 2 (TFIIAy), found in Oryza sativa subsp. indica (Rice).